The primary structure comprises 362 residues: F-box protein At1g54550 (362 aa).

The 47-residue stretch at 1–47 folds into the F-box domain; that stretch reads MATVTDLPDDLVREIFSRVPLTSLRAVRSTCKKWNAISKYDILGKKA.

This is F-box protein At1g54550 from Arabidopsis thaliana (Mouse-ear cress).